Here is a 446-residue protein sequence, read N- to C-terminus: Histone acetyltransferase type B subunit 2 (446 aa).

5 WD repeats span residues 138 to 178 (DHPG…ITPS), 189 to 229 (GHKE…GTSK), 231 to 270 (LKYS…QIID), 286 to 326 (GHSD…SKVH), and 330 to 370 (GHQD…DEQT). The tract at residues 372–376 (DDAED) is interaction with the histone H4 N-terminus. One copy of the WD 6 repeat lies at 387-427 (GHTNHLADFSWNRNDPWLVCSAAEDNLLQIWKVANSIVSKE). Residues 427 to 446 (EPADMSTPELDDPKPKQSSH) are disordered. A compositionally biased stretch (basic and acidic residues) spans 437 to 446 (DDPKPKQSSH).

It belongs to the WD repeat RBAP46/RBAP48/MSI1 family. Component of the HAT-B complex composed of at least hat-1 and hat-2. The HAT-B complex binds to histone H4 tail.

The protein localises to the cytoplasm. It localises to the nucleus. Its function is as follows. Regulatory subunit of the histone acetylase B (HAT-B) complex. The complex acetylates 'Lys-12' of histone H4 which is required for telomeric silencing. This Neurospora crassa (strain ATCC 24698 / 74-OR23-1A / CBS 708.71 / DSM 1257 / FGSC 987) protein is Histone acetyltransferase type B subunit 2 (hat-2).